The primary structure comprises 808 residues: Probable inorganic carbon transporter subunit DabA (808 aa).

Residues cysteine 335, aspartate 337, histidine 497, and cysteine 512 each coordinate Zn(2+).

This sequence belongs to the inorganic carbon transporter (TC 9.A.2) DabA family. In terms of assembly, forms a complex with DabB. Zn(2+) serves as cofactor.

It localises to the cell inner membrane. Part of an energy-coupled inorganic carbon pump. This is Probable inorganic carbon transporter subunit DabA from Rhodopseudomonas palustris (strain TIE-1).